The primary structure comprises 382 residues: Mannitol-1-phosphate 5-dehydrogenase (382 aa).

3 to 14 provides a ligand contact to NAD(+); sequence ALHFGAGNIGRG. Lys-269 carries the N6-acetyllysine modification.

The protein belongs to the mannitol dehydrogenase family.

It carries out the reaction D-mannitol 1-phosphate + NAD(+) = beta-D-fructose 6-phosphate + NADH + H(+). The chain is Mannitol-1-phosphate 5-dehydrogenase from Shigella sonnei (strain Ss046).